Consider the following 299-residue polypeptide: MMCFLLIISSILVVFAFVLGNVANGFIALVNVIDWVNTRKISSAEQILTALVVSRIGLLWVMLFLWYATVFNSALYGLEVRIVASNAWAVTNHFSMWLAASLSIFCLLKIANFSNLISLHLKKRIKSVVLVILLGPLVFLICNLAVITMDERVWTKEYEGNVTWKIKLRNAIHLSSLTVTTLANLIPFTLSLICFLLLICSLCKHLKKMRLHSKGSQDPSTKVHIKALQTVTSFLMLFAIYFLCIITSTWNLRTQQSKLVLLLCQTVAIMYPSFHSFILIMGSRKLKQTFLSVLWQMTR.

Met1 is a topological domain (extracellular). A helical transmembrane segment spans residues 2 to 22; it reads MCFLLIISSILVVFAFVLGNV. Residues 23–55 are Cytoplasmic-facing; the sequence is ANGFIALVNVIDWVNTRKISSAEQILTALVVSR. A helical transmembrane segment spans residues 56–76; the sequence is IGLLWVMLFLWYATVFNSALY. The Extracellular segment spans residues 77–87; sequence GLEVRIVASNA. The helical transmembrane segment at 88-108 threads the bilayer; sequence WAVTNHFSMWLAASLSIFCLL. The Cytoplasmic portion of the chain corresponds to 109–127; the sequence is KIANFSNLISLHLKKRIKS. Residues 128 to 148 traverse the membrane as a helical segment; sequence VVLVILLGPLVFLICNLAVIT. Topologically, residues 149-181 are extracellular; that stretch reads MDERVWTKEYEGNVTWKIKLRNAIHLSSLTVTT. N-linked (GlcNAc...) asparagine glycosylation occurs at Asn161. Residues 182 to 202 traverse the membrane as a helical segment; it reads LANLIPFTLSLICFLLLICSL. At 203 to 226 the chain is on the cytoplasmic side; it reads CKHLKKMRLHSKGSQDPSTKVHIK. A helical transmembrane segment spans residues 227–247; that stretch reads ALQTVTSFLMLFAIYFLCIIT. Residues 248–259 lie on the Extracellular side of the membrane; it reads STWNLRTQQSKL. A helical membrane pass occupies residues 260 to 280; it reads VLLLCQTVAIMYPSFHSFILI. Topologically, residues 281–299 are cytoplasmic; the sequence is MGSRKLKQTFLSVLWQMTR.

It belongs to the G-protein coupled receptor T2R family. As to expression, expressed in subsets of taste receptor cells of the tongue and exclusively in gustducin-positive cells.

It is found in the membrane. Receptor that may play a role in the perception of bitterness and is gustducin-linked. May play a role in sensing the chemical composition of the gastrointestinal content. The activity of this receptor may stimulate alpha gustducin, mediate PLC-beta-2 activation and lead to the gating of TRPM5. This is Taste receptor type 2 member 19 (TAS2R19) from Homo sapiens (Human).